A 634-amino-acid chain; its full sequence is DNA-directed RNA polymerase subunit gamma (634 aa).

Cysteine 74, cysteine 76, cysteine 89, and cysteine 92 together coordinate Zn(2+). Residues aspartate 471, aspartate 473, and aspartate 475 each contribute to the Mg(2+) site.

It belongs to the RNA polymerase beta' chain family. RpoC1 subfamily. As to quaternary structure, in cyanobacteria the RNAP catalytic core is composed of 2 alpha, 1 beta, 1 beta', 1 gamma and 1 omega subunit. When a sigma factor is associated with the core the holoenzyme is formed, which can initiate transcription. Requires Mg(2+) as cofactor. Zn(2+) serves as cofactor.

It catalyses the reaction RNA(n) + a ribonucleoside 5'-triphosphate = RNA(n+1) + diphosphate. Functionally, DNA-dependent RNA polymerase catalyzes the transcription of DNA into RNA using the four ribonucleoside triphosphates as substrates. This chain is DNA-directed RNA polymerase subunit gamma, found in Prochlorococcus marinus (strain SARG / CCMP1375 / SS120).